The sequence spans 725 residues: N-alpha-acetyltransferase 35, NatC auxiliary subunit (725 aa).

Residues 548–573 (ERIMEEQQKGRSSKKTKKKKKVRPLS) are disordered. Positions 558 to 571 (RSSKKTKKKKKVRP) are enriched in basic residues.

The protein belongs to the MAK10 family. In terms of assembly, component of the N-terminal acetyltransferase C (NatC) complex.

Its subcellular location is the cytoplasm. Its function is as follows. Auxillary component of the N-terminal acetyltransferase C (NatC) complex which catalyzes acetylation of N-terminal methionine residues. N-terminal acetylation protects proteins from ubiquitination and degradation by the N-end rule pathway. The chain is N-alpha-acetyltransferase 35, NatC auxiliary subunit (NAA35) from Gallus gallus (Chicken).